Consider the following 425-residue polypeptide: ATP-dependent RNA helicase RhlB (425 aa).

The Q motif motif lies at 9-37; sequence TRFADLALHPKIQQAISSAGFEYCTPIQA. One can recognise a Helicase ATP-binding domain in the interval 40–218; sequence LPVALSNRDV…YEHMNAPTKL (179 aa). 53-60 lines the ATP pocket; sequence AQTGTGKT. Positions 164 to 167 match the DEAD box motif; sequence DEAD. The Helicase C-terminal domain occupies 242–389; the sequence is KFPLLLTLIE…VTKYDGDALL (148 aa). The interval 391–425 is disordered; the sequence is DLRRPRPIQRRRRHNSGGGKGKPRGRRSGPPRNAS. A compositionally biased stretch (basic residues) spans 395–419; that stretch reads PRPIQRRRRHNSGGGKGKPRGRRSG.

This sequence belongs to the DEAD box helicase family. RhlB subfamily. Component of the RNA degradosome, which is a multiprotein complex involved in RNA processing and mRNA degradation.

Its subcellular location is the cytoplasm. The enzyme catalyses ATP + H2O = ADP + phosphate + H(+). DEAD-box RNA helicase involved in RNA degradation. Has RNA-dependent ATPase activity and unwinds double-stranded RNA. This Idiomarina loihiensis (strain ATCC BAA-735 / DSM 15497 / L2-TR) protein is ATP-dependent RNA helicase RhlB.